Consider the following 83-residue polypeptide: Exodeoxyribonuclease 7 small subunit (83 aa).

Residues 63 to 83 (VQNDDGTTGTEPLADTGESGR) form a disordered region.

It belongs to the XseB family. As to quaternary structure, heterooligomer composed of large and small subunits.

It is found in the cytoplasm. It carries out the reaction Exonucleolytic cleavage in either 5'- to 3'- or 3'- to 5'-direction to yield nucleoside 5'-phosphates.. Its function is as follows. Bidirectionally degrades single-stranded DNA into large acid-insoluble oligonucleotides, which are then degraded further into small acid-soluble oligonucleotides. The protein is Exodeoxyribonuclease 7 small subunit of Gluconobacter oxydans (strain 621H) (Gluconobacter suboxydans).